Here is a 465-residue protein sequence, read N- to C-terminus: 23S rRNA (uracil(1939)-C(5))-methyltransferase RlmD (465 aa).

The segment at 1–20 (MSEAVPLSTPGASHAGAATD) is disordered. In terms of domain architecture, TRAM spans 12 to 80 (ASHAGAATDR…PTYEQAQVVD (69 aa)). Residues Cys-93, Cys-99, Cys-102, and Cys-181 each coordinate [4Fe-4S] cluster. Gln-289, Phe-318, Asn-323, Glu-339, Asn-367, and Asp-388 together coordinate S-adenosyl-L-methionine. Cys-421 acts as the Nucleophile in catalysis.

Belongs to the class I-like SAM-binding methyltransferase superfamily. RNA M5U methyltransferase family. RlmD subfamily.

The catalysed reaction is uridine(1939) in 23S rRNA + S-adenosyl-L-methionine = 5-methyluridine(1939) in 23S rRNA + S-adenosyl-L-homocysteine + H(+). Functionally, catalyzes the formation of 5-methyl-uridine at position 1939 (m5U1939) in 23S rRNA. The sequence is that of 23S rRNA (uracil(1939)-C(5))-methyltransferase RlmD from Burkholderia thailandensis (strain ATCC 700388 / DSM 13276 / CCUG 48851 / CIP 106301 / E264).